The following is a 132-amino-acid chain: L-ectoine synthase (132 aa).

This sequence belongs to the ectoine synthase family.

The enzyme catalyses (2S)-4-acetamido-2-aminobutanoate = L-ectoine + H2O. Its pathway is amine and polyamine biosynthesis; ectoine biosynthesis; L-ectoine from L-aspartate 4-semialdehyde: step 3/3. Functionally, catalyzes the circularization of gamma-N-acetyl-alpha,gamma-diaminobutyric acid (ADABA) to ectoine (1,4,5,6-tetrahydro-2-methyl-4-pyrimidine carboxylic acid), which is an excellent osmoprotectant. This Teredinibacter turnerae (strain ATCC 39867 / T7901) protein is L-ectoine synthase.